Reading from the N-terminus, the 837-residue chain is Translation initiation factor IF-2 (837 aa).

Disordered regions lie at residues 1–44 and 62–251; these read MTEK…VRKS and KAQE…TKPA. Basic and acidic residues-rich tracts occupy residues 62–102 and 111–165; these read KAQE…EAKP and ADPE…HNDS. Residues 189–205 are compositionally biased toward basic residues; that stretch reads RENHIRTGKNKVTKAKK. The span at 206–229 shows a compositional bias: basic and acidic residues; the sequence is GGRDDNGSKDERSADRRNQKDMRG. A compositionally biased stretch (polar residues) spans 242–251; the sequence is TLQQAFTKPA. The tr-type G domain maps to 337–506; the sequence is QRAPVVTIMG…LLQSEVLELT (170 aa). The tract at residues 346 to 353 is G1; that stretch reads GHVDHGKT. Position 346 to 353 (346 to 353) interacts with GTP; that stretch reads GHVDHGKT. Residues 371–375 are G2; the sequence is GITQH. The G3 stretch occupies residues 392–395; sequence DTPG. GTP is bound by residues 392 to 396 and 446 to 449; these read DTPGH and NKID. The tract at residues 446–449 is G4; it reads NKID. Positions 482–484 are G5; the sequence is SAK.

It belongs to the TRAFAC class translation factor GTPase superfamily. Classic translation factor GTPase family. IF-2 subfamily.

The protein resides in the cytoplasm. One of the essential components for the initiation of protein synthesis. Protects formylmethionyl-tRNA from spontaneous hydrolysis and promotes its binding to the 30S ribosomal subunits. Also involved in the hydrolysis of GTP during the formation of the 70S ribosomal complex. This is Translation initiation factor IF-2 from Actinobacillus succinogenes (strain ATCC 55618 / DSM 22257 / CCUG 43843 / 130Z).